Reading from the N-terminus, the 91-residue chain is Small ribosomal subunit protein uS15c (91 aa).

The protein belongs to the universal ribosomal protein uS15 family. In terms of assembly, part of the 30S ribosomal subunit.

The protein localises to the plastid. It is found in the chloroplast. The sequence is that of Small ribosomal subunit protein uS15c (rps15) from Phalaenopsis aphrodite subsp. formosana (Moth orchid).